The following is a 398-amino-acid chain: Acetate kinase 1 (398 aa).

Asn-9 lines the Mg(2+) pocket. Lys-16 contacts ATP. Arg-89 serves as a coordination point for substrate. The Proton donor/acceptor role is filled by Asp-146. ATP is bound by residues 206-210 (HLGNG), 281-283 (DCR), and 329-333 (GIGEN). Glu-384 is a Mg(2+) binding site.

Belongs to the acetokinase family. In terms of assembly, homodimer. Requires Mg(2+) as cofactor. Mn(2+) is required as a cofactor.

Its subcellular location is the cytoplasm. The catalysed reaction is acetate + ATP = acetyl phosphate + ADP. It functions in the pathway metabolic intermediate biosynthesis; acetyl-CoA biosynthesis; acetyl-CoA from acetate: step 1/2. Its function is as follows. Catalyzes the formation of acetyl phosphate from acetate and ATP. Can also catalyze the reverse reaction. The chain is Acetate kinase 1 from Photobacterium profundum (strain SS9).